The chain runs to 227 residues: Abasic site processing protein YoaM (227 aa).

Residue cysteine 2 is the Nucleophile of the active site. Cysteine 2 is subject to Thiazolidine linkage to a ring-opened DNA abasic site. Glutamate 106 is a catalytic residue.

This sequence belongs to the SOS response-associated peptidase family.

Formation and reversal of DNA-protein cross-link depends on DNA context. Catalyzes formation of the thiazolidine linkage in presence of abasic sites in single-stranded DNA. Mediates the reversal of the thiazolidine cross-link in presence of double stranded DNA. Its function is as follows. Sensor of abasic sites in single-stranded DNA (ssDNA) required to preserve genome integrity by promoting error-free repair of abasic sites. Recognizes and binds abasic sites in ssDNA at replication forks and chemically modifies the lesion by forming a covalent cross-link with DNA: forms a stable thiazolidine linkage between a ring-opened abasic site and the alpha-amino and sulfhydryl substituents of its N-terminal catalytic cysteine residue. The DNA-protein cross-link is then reversed: able to catalyze the reversal of the thiazolidine cross-link and cycle between a cross-link and a non-cross-linked state depending on DNA context: mediates self-reversal of the thiazolidine cross-link in double stranded DNA. May act as a protease: mediates autocatalytic processing of its N-terminal methionine in order to expose the catalytic cysteine. The protein is Abasic site processing protein YoaM (yoaM) of Bacillus subtilis (strain 168).